Consider the following 446-residue polypeptide: NADH-ubiquinone oxidoreductase chain 4 (446 aa).

Helical transmembrane passes span 4 to 24 (LILMMIFISPICFMQGLFWMV), 28 to 48 (LFVITFVLILMNFCLNYFVNI), 56 to 76 (VLSYGLILLSFWICSLMIVAS), 88 to 105 (LFLFNVLMLLIFLVLTFS), 109 to 131 (LFMFYLFFESSLIPTLFLILGWG), 141 to 161 (VYLLFYTLLVSLPLLVGIFYL), 182 to 202 (LLYLAMILAFLVKMPMFLVHL), 218 to 238 (ILAGIMLKLGGYGLLAVFSFL), 245 to 265 (YNYIWVSISLIGGVLISLVCL), 272 to 292 (ALIAYSSVAHMGIVLGGLMTL), 297 to 317 (LSGSYTLMIGHGLCSSGLFCL), 330 to 350 (LLINKGLLNFMPSMTLWWFLL), 373 to 393 (IVSWSWLTMISLSFLSFFSAA), and 426 to 446 (FLHWFPLNLLILKSEVCLFWI).

The protein belongs to the complex I subunit 4 family.

The protein resides in the mitochondrion membrane. The catalysed reaction is a ubiquinone + NADH + 5 H(+)(in) = a ubiquinol + NAD(+) + 4 H(+)(out). Functionally, core subunit of the mitochondrial membrane respiratory chain NADH dehydrogenase (Complex I) that is believed to belong to the minimal assembly required for catalysis. Complex I functions in the transfer of electrons from NADH to the respiratory chain. The immediate electron acceptor for the enzyme is believed to be ubiquinone. In Ceratitis capitata (Mediterranean fruit fly), this protein is NADH-ubiquinone oxidoreductase chain 4 (ND4).